The following is a 478-amino-acid chain: Cytochrome c-552 (478 aa).

A signal peptide spans 1-27; it reads MKKQWTRRSAAAIAMVTTLLLSSHSFA. Histidine 91 is a binding site for heme c. 3 residues coordinate heme: cysteine 119, cysteine 122, and lysine 123. Residues cysteine 157, cysteine 160, histidine 161, cysteine 206, cysteine 209, and histidine 210 each contribute to the heme c site. Glutamate 212, tyrosine 213, lysine 258, and glutamine 260 together coordinate Ca(2+). Residue tyrosine 213 coordinates substrate. Histidine 261 is a binding site for substrate. Residues histidine 272, cysteine 279, cysteine 282, histidine 283, histidine 298, cysteine 311, cysteine 314, histidine 315, and histidine 390 each coordinate heme c.

The protein belongs to the cytochrome c-552 family. Requires Ca(2+) as cofactor. The cofactor is heme c.

It is found in the periplasm. It catalyses the reaction 6 Fe(III)-[cytochrome c] + NH4(+) + 2 H2O = 6 Fe(II)-[cytochrome c] + nitrite + 8 H(+). The protein operates within nitrogen metabolism; nitrate reduction (assimilation). Functionally, catalyzes the reduction of nitrite to ammonia, consuming six electrons in the process. The protein is Cytochrome c-552 of Aliivibrio salmonicida (strain LFI1238) (Vibrio salmonicida (strain LFI1238)).